The chain runs to 307 residues: Aspartate carbamoyltransferase catalytic subunit (307 aa).

Carbamoyl phosphate is bound by residues Arg56 and Thr57. Position 84 (Lys84) interacts with L-aspartate. Carbamoyl phosphate contacts are provided by Arg106, His136, and Gln139. Residues Arg169 and Arg221 each contribute to the L-aspartate site. Residues Ala262 and Pro263 each contribute to the carbamoyl phosphate site.

The protein belongs to the aspartate/ornithine carbamoyltransferase superfamily. ATCase family. In terms of assembly, heterododecamer (2C3:3R2) of six catalytic PyrB chains organized as two trimers (C3), and six regulatory PyrI chains organized as three dimers (R2).

The catalysed reaction is carbamoyl phosphate + L-aspartate = N-carbamoyl-L-aspartate + phosphate + H(+). It functions in the pathway pyrimidine metabolism; UMP biosynthesis via de novo pathway; (S)-dihydroorotate from bicarbonate: step 2/3. Its function is as follows. Catalyzes the condensation of carbamoyl phosphate and aspartate to form carbamoyl aspartate and inorganic phosphate, the committed step in the de novo pyrimidine nucleotide biosynthesis pathway. The polypeptide is Aspartate carbamoyltransferase catalytic subunit (Streptococcus pneumoniae (strain P1031)).